The primary structure comprises 345 residues: S-adenosylmethionine:tRNA ribosyltransferase-isomerase (345 aa).

This sequence belongs to the QueA family. Monomer.

It is found in the cytoplasm. It carries out the reaction 7-aminomethyl-7-carbaguanosine(34) in tRNA + S-adenosyl-L-methionine = epoxyqueuosine(34) in tRNA + adenine + L-methionine + 2 H(+). Its pathway is tRNA modification; tRNA-queuosine biosynthesis. Its function is as follows. Transfers and isomerizes the ribose moiety from AdoMet to the 7-aminomethyl group of 7-deazaguanine (preQ1-tRNA) to give epoxyqueuosine (oQ-tRNA). The polypeptide is S-adenosylmethionine:tRNA ribosyltransferase-isomerase (Rhodospirillum rubrum (strain ATCC 11170 / ATH 1.1.1 / DSM 467 / LMG 4362 / NCIMB 8255 / S1)).